We begin with the raw amino-acid sequence, 37 residues long: MKIRASVRKICDKCRLIRRRRRIMIVCSNPKHKQRQG.

Belongs to the bacterial ribosomal protein bL36 family.

It localises to the plastid. The protein resides in the chloroplast. This is Large ribosomal subunit protein bL36c from Huperzia lucidula (Shining clubmoss).